A 210-amino-acid polypeptide reads, in one-letter code: NAD(P)H-quinone oxidoreductase subunit I (210 aa).

4Fe-4S ferredoxin-type domains follow at residues 54–83 (GRIH…VDWV) and 94–123 (YSYS…VTED). [4Fe-4S] cluster contacts are provided by C63, C66, C69, C73, C103, C106, C109, and C113.

This sequence belongs to the complex I 23 kDa subunit family. NDH-1 is composed of at least 11 different subunits. [4Fe-4S] cluster serves as cofactor.

The protein localises to the cellular thylakoid membrane. It carries out the reaction a plastoquinone + NADH + (n+1) H(+)(in) = a plastoquinol + NAD(+) + n H(+)(out). It catalyses the reaction a plastoquinone + NADPH + (n+1) H(+)(in) = a plastoquinol + NADP(+) + n H(+)(out). NDH-1 shuttles electrons from an unknown electron donor, via FMN and iron-sulfur (Fe-S) centers, to quinones in the respiratory and/or the photosynthetic chain. The immediate electron acceptor for the enzyme in this species is believed to be plastoquinone. Couples the redox reaction to proton translocation, and thus conserves the redox energy in a proton gradient. In Synechococcus sp. (strain JA-3-3Ab) (Cyanobacteria bacterium Yellowstone A-Prime), this protein is NAD(P)H-quinone oxidoreductase subunit I.